An 888-amino-acid polypeptide reads, in one-letter code: Alanine--tRNA ligase (888 aa).

Zn(2+)-binding residues include His573, His577, Cys676, and His680.

It belongs to the class-II aminoacyl-tRNA synthetase family. Zn(2+) is required as a cofactor.

It is found in the cytoplasm. It catalyses the reaction tRNA(Ala) + L-alanine + ATP = L-alanyl-tRNA(Ala) + AMP + diphosphate. Its function is as follows. Catalyzes the attachment of alanine to tRNA(Ala) in a two-step reaction: alanine is first activated by ATP to form Ala-AMP and then transferred to the acceptor end of tRNA(Ala). Also edits incorrectly charged Ser-tRNA(Ala) and Gly-tRNA(Ala) via its editing domain. The sequence is that of Alanine--tRNA ligase from Corynebacterium diphtheriae (strain ATCC 700971 / NCTC 13129 / Biotype gravis).